Reading from the N-terminus, the 506-residue chain is Galactose/methyl galactoside import ATP-binding protein MglA (506 aa).

ABC transporter domains lie at 14–249 and 260–506; these read LTMT…VGRE and VPKE…AKYL. 46-53 provides a ligand contact to ATP; sequence GENGAGKS.

The protein belongs to the ABC transporter superfamily. Galactose/methyl galactoside importer (TC 3.A.1.2.3) family. In terms of assembly, the complex is composed of one ATP-binding protein (MglA), two transmembrane proteins (MglC) and a solute-binding protein (MglB).

Its subcellular location is the cell inner membrane. The catalysed reaction is D-galactose(out) + ATP + H2O = D-galactose(in) + ADP + phosphate + H(+). The enzyme catalyses methyl beta-D-galactoside(out) + ATP + H2O = methyl beta-D-galactoside(in) + ADP + phosphate + H(+). Part of the ABC transporter complex MglABC involved in galactose/methyl galactoside import. Responsible for energy coupling to the transport system. This is Galactose/methyl galactoside import ATP-binding protein MglA from Haemophilus influenzae (strain 86-028NP).